We begin with the raw amino-acid sequence, 612 residues long: Actin-binding LIM protein 2 (612 aa).

LIM zinc-binding domains lie at 22-81 (ILCN…LYGT), 81-141 (TRCF…TLVG), 151-210 (RSCG…KFGI), and 210-270 (IRCD…ARTE). Zn(2+)-binding residues include cysteine 83, cysteine 86, histidine 103, cysteine 106, cysteine 109, cysteine 112, cysteine 131, and cysteine 134. Positions 212, 215, 232, 235, 238, 241, 260, and 263 each coordinate Zn(2+). Residues 269–278 (TEDKSKETRT) show a composition bias toward basic and acidic residues. Disordered regions lie at residues 269–295 (TEDK…SGSP) and 341–433 (AVGD…DNIY). Composition is skewed to low complexity over residues 279–295 (SSES…SGSP) and 364–373 (SSPSSAGSVS). Serine 282, serine 294, serine 365, and serine 368 each carry phosphoserine. The segment covering 394–416 (SGRSTPSLSVHSDSRPPSSTYQQ) has biased composition (polar residues). Serine 453 is modified (phosphoserine). The segment at 471 to 520 (ADTRTNSPDLDSQSLSLSSGADQEPLQRMPGDSLYSRFPYSKPDTLPGPR) is disordered. Position 473 is a phosphothreonine (threonine 473). Phosphoserine is present on residues serine 477 and serine 579. Residues 477 to 489 (SPDLDSQSLSLSS) show a composition bias toward low complexity. One can recognise an HP domain in the interval 544-612 (TREYKIYPYD…NDLKKKALLF (69 aa)).

Interacts with F-actin and ABRA.

It is found in the cytoplasm. Functionally, may act as scaffold protein. May stimulate ABRA activity and ABRA-dependent SRF transcriptional activity. In Rattus norvegicus (Rat), this protein is Actin-binding LIM protein 2 (Ablim2).